Reading from the N-terminus, the 241-residue chain is Pyridoxal phosphate phosphatase PHOSPHO2 (241 aa).

Aspartate 8 acts as the Nucleophile in catalysis. Positions 8 and 10 each coordinate Mg(2+). Aspartate 10 functions as the Proton donor in the catalytic mechanism. Substrate-binding residues include aspartate 19 and aspartate 99. Mg(2+) is bound at residue aspartate 179.

Belongs to the HAD-like hydrolase superfamily. PHOSPHO family. It depends on Mg(2+) as a cofactor.

It catalyses the reaction pyridoxal 5'-phosphate + H2O = pyridoxal + phosphate. Its function is as follows. Phosphatase that has high activity toward pyridoxal 5'-phosphate (PLP). Also active at much lower level toward pyrophosphate, phosphoethanolamine (PEA), phosphocholine (PCho), phospho-l-tyrosine, fructose-6-phosphate, p-nitrophenyl phosphate, and h-glycerophosphate. This Homo sapiens (Human) protein is Pyridoxal phosphate phosphatase PHOSPHO2 (PHOSPHO2).